We begin with the raw amino-acid sequence, 143 residues long: Large ribosomal subunit protein uL15 (143 aa).

Residues M1–G52 form a disordered region. Positions R21 to S31 are enriched in gly residues.

Belongs to the universal ribosomal protein uL15 family. As to quaternary structure, part of the 50S ribosomal subunit.

In terms of biological role, binds to the 23S rRNA. In Francisella tularensis subsp. novicida (strain U112), this protein is Large ribosomal subunit protein uL15.